We begin with the raw amino-acid sequence, 615 residues long: 1-deoxy-D-xylulose-5-phosphate synthase (615 aa).

Residues His-72 and 111 to 113 (GHS) contribute to the thiamine diphosphate site. Asp-142 is a binding site for Mg(2+). Residues 143–144 (GA), Asn-171, Tyr-278, and Glu-360 each bind thiamine diphosphate. Asn-171 contributes to the Mg(2+) binding site.

It belongs to the transketolase family. DXPS subfamily. Homodimer. Mg(2+) serves as cofactor. Thiamine diphosphate is required as a cofactor.

It catalyses the reaction D-glyceraldehyde 3-phosphate + pyruvate + H(+) = 1-deoxy-D-xylulose 5-phosphate + CO2. Its pathway is metabolic intermediate biosynthesis; 1-deoxy-D-xylulose 5-phosphate biosynthesis; 1-deoxy-D-xylulose 5-phosphate from D-glyceraldehyde 3-phosphate and pyruvate: step 1/1. In terms of biological role, catalyzes the acyloin condensation reaction between C atoms 2 and 3 of pyruvate and glyceraldehyde 3-phosphate to yield 1-deoxy-D-xylulose-5-phosphate (DXP). The sequence is that of 1-deoxy-D-xylulose-5-phosphate synthase from Campylobacter jejuni subsp. jejuni serotype O:2 (strain ATCC 700819 / NCTC 11168).